We begin with the raw amino-acid sequence, 404 residues long: Glucose-1-phosphate adenylyltransferase (404 aa).

Alpha-D-glucose 1-phosphate contacts are provided by residues tyrosine 99, glycine 164, 179–180, and serine 197; that span reads EK.

This sequence belongs to the bacterial/plant glucose-1-phosphate adenylyltransferase family.

The catalysed reaction is alpha-D-glucose 1-phosphate + ATP + H(+) = ADP-alpha-D-glucose + diphosphate. Its pathway is glycan biosynthesis; glycogen biosynthesis. Involved in the biosynthesis of ADP-glucose building block, required in the biosynthesis of maltose-1-phosphate (M1P) and in the elongation reactions to produce linear alpha-1,4-glucans. Catalyzes the reaction between ATP and alpha-D-glucose 1-phosphate (G1P) to produce pyrophosphate and ADP-Glc. This chain is Glucose-1-phosphate adenylyltransferase, found in Mycolicibacterium smegmatis (strain ATCC 700084 / mc(2)155) (Mycobacterium smegmatis).